Consider the following 680-residue polypeptide: MNFETSRCATLQYCPDPYIQRFIETPAHFSWKESYYRSAMSQSTQTSEFLSPEVFQHIWDFLEQPICSVQPIELNFVDEPSENGATNKIEISMDCIRMQDSDLSDPMWPQYTNLGLLNSMDQQIQNGSSSTSPYNTDHAQNSVTAPSPYAQPSSTFDALSPSPAIPSNTDYPGPHSFDVSFQQSSTAKSATWTYSTELKKLYCQIAKTCPIQIKVMTPPPQGAVIRAMPVYKKAEHVTEVVKRCPNHELSREFNEGQIAPPSHLIRVEGNSHAQYVEDPITGRQSVLVPYEPPQVGTEFTTVLYNFMCNSSCVGGMNRRPILIIVTLETRDGQVLGRRCFEARICACPGRDRKADEDSIRKQQVSDSAKNGDGTKRPFRQNTHGIQMTSIKKRRSPDDELLYLPVRGRETYEMLLKIKESLELMQYLPQHTIETYRQQQQQQHQHLLQKQTSMQSQSSYGNSSPPLNKMNSMNKLPSVSQLINPQQRNALTPTTMPEGMGANIPMMGTHMPMAGDMNGLSPTQALPPPLSMPSTSHCTPPPPYPTDCSIVSFLARLGCSSCLDYFTTQGLTTIYQIEHYSMDDLASLKIPEQFRHAIWKGILDHRQLHDFSSPPHLLRTPSGASTVSVGSSETRGERVIDAVRFTLRQTISFPPRDEWNDFNFDMDSRRNKQQRIKEEGE.

A transcription activation region spans residues 1-107 (MNFETSRCAT…MQDSDLSDPM (107 aa)). Over residues 123-157 (QIQNGSSSTSPYNTDHAQNSVTAPSPYAQPSSTFD) the composition is skewed to polar residues. The interval 123–171 (QIQNGSSSTSPYNTDHAQNSVTAPSPYAQPSSTFDALSPSPAIPSNTDY) is disordered. The DNA-binding element occupies 170–362 (DYPGPHSFDV…KADEDSIRKQ (193 aa)). Positions 244, 247, 308, and 312 each coordinate Zn(2+). The span at 351 to 360 (DRKADEDSIR) shows a compositional bias: basic and acidic residues. Disordered regions lie at residues 351–393 (DRKA…IKKR) and 436–472 (RQQQQQQHQHLLQKQTSMQSQSSYGNSSPPLNKMNSM). The segment at 352–388 (RKADEDSIRKQQVSDSAKNGDGTKRPFRQNTHGIQMT) is interaction with HIPK2. The segment covering 379–389 (RQNTHGIQMTS) has biased composition (polar residues). The tract at residues 394–443 (RSPDDELLYLPVRGRETYEMLLKIKESLELMQYLPQHTIETYRQQQQQQH) is oligomerization. Residues 437-463 (QQQQQQHQHLLQKQTSMQSQSSYGNSS) show a composition bias toward low complexity. The SAM domain occupies 541-607 (PPYPTDCSIV…WKGILDHRQL (67 aa)). Residues 610 to 680 (FSSPPHLLRT…KQQRIKEEGE (71 aa)) are transactivation inhibition. K676 participates in a covalent cross-link: Glycyl lysine isopeptide (Lys-Gly) (interchain with G-Cter in SUMO).

It belongs to the p53 family. As to quaternary structure, binds DNA as a homotetramer. Isoform composition of the tetramer may determine transactivation activity. Interacts with HIPK2. Interacts with SSRP1, leading to stimulate coactivator activity. Interacts with PDS5A. Interacts (via activation domain) with NOC2L. Interacts with WWP1. Zn(2+) serves as cofactor. In terms of processing, may be sumoylated. Ubiquitinated. Polyubiquitination involves WWP1 and leads to proteasomal degradation of this protein. Widely expressed, notably in thymus, prostate, placenta and skeletal muscle, although the precise isoform varies according to tissue type. Progenitor cell layers of skin, breast and prostate express high levels of DeltaN-type isoforms.

It localises to the nucleus. In terms of biological role, acts as a sequence specific DNA binding transcriptional activator or repressor. The isoforms contain a varying set of transactivation and auto-regulating transactivation inhibiting domains thus showing an isoform specific activity. May be required in conjunction with TP73/p73 for initiation of p53/TP53 dependent apoptosis in response to genotoxic insults and the presence of activated oncogenes. Involved in Notch signaling by probably inducing JAG1 and JAG2. Activates transcription of the p21 promoter. Activates RIPK4 transcription. Plays a role in the regulation of epithelial morphogenesis. The ratio of DeltaN-type and TA*-type isoforms may govern the maintenance of epithelial stem cell compartments and regulate the initiation of epithelial stratification from the undifferentiated embryonal ectoderm. Required for limb formation from the apical ectodermal ridge. This chain is Tumor protein 63 (Tp63), found in Mus musculus (Mouse).